A 368-amino-acid polypeptide reads, in one-letter code: tRNA N6-adenosine threonylcarbamoyltransferase (368 aa).

2 residues coordinate Fe cation: H108 and H112. Residues 149-153 (LVSGG), D183, G196, D200, and N301 each bind substrate. D329 serves as a coordination point for Fe cation.

This sequence belongs to the KAE1 / TsaD family. The cofactor is Fe(2+).

The protein resides in the cytoplasm. It carries out the reaction L-threonylcarbamoyladenylate + adenosine(37) in tRNA = N(6)-L-threonylcarbamoyladenosine(37) in tRNA + AMP + H(+). Required for the formation of a threonylcarbamoyl group on adenosine at position 37 (t(6)A37) in tRNAs that read codons beginning with adenine. Is involved in the transfer of the threonylcarbamoyl moiety of threonylcarbamoyl-AMP (TC-AMP) to the N6 group of A37, together with TsaE and TsaB. TsaD likely plays a direct catalytic role in this reaction. The chain is tRNA N6-adenosine threonylcarbamoyltransferase from Paenarthrobacter aurescens (strain TC1).